Reading from the N-terminus, the 239-residue chain is Xyloglucan-specific endo-beta-1,4-glucanase A (239 aa).

The N-terminal stretch at 1 to 14 (MKLLALSLASLASA) is a signal peptide. Asn-172 carries an N-linked (GlcNAc...) asparagine glycan.

Belongs to the glycosyl hydrolase 12 (cellulase H) family.

The protein localises to the secreted. It carries out the reaction xyloglucan + H2O = xyloglucan oligosaccharides.. Catalyzes endohydrolysis of 1,4-beta-D-glucosidic linkages in xyloglucan with retention of the beta-configuration of the glycosyl residues. Specific for xyloglucan and does not hydrolyze other cell wall components. Active against tamarind xyloglucan. This Emericella nidulans (strain FGSC A4 / ATCC 38163 / CBS 112.46 / NRRL 194 / M139) (Aspergillus nidulans) protein is Xyloglucan-specific endo-beta-1,4-glucanase A (xgeA).